The primary structure comprises 246 residues: Purine nucleoside phosphorylase Cgl2154/cg2365 (246 aa).

Zn(2+) contacts are provided by histidine 68, cysteine 107, and histidine 124.

The protein belongs to the purine nucleoside phosphorylase YfiH/LACC1 family. In terms of assembly, homodimer. Cu(2+) is required as a cofactor. It depends on Zn(2+) as a cofactor.

The enzyme catalyses adenosine + phosphate = alpha-D-ribose 1-phosphate + adenine. It carries out the reaction S-methyl-5'-thioadenosine + phosphate = 5-(methylsulfanyl)-alpha-D-ribose 1-phosphate + adenine. It catalyses the reaction inosine + phosphate = alpha-D-ribose 1-phosphate + hypoxanthine. The catalysed reaction is adenosine + H2O + H(+) = inosine + NH4(+). Functionally, purine nucleoside enzyme that catalyzes the phosphorolysis of adenosine and inosine nucleosides, yielding D-ribose 1-phosphate and the respective free bases, adenine and hypoxanthine. Also catalyzes the phosphorolysis of S-methyl-5'-thioadenosine into adenine and S-methyl-5-thio-alpha-D-ribose 1-phosphate. Also has adenosine deaminase activity. The protein is Purine nucleoside phosphorylase Cgl2154/cg2365 of Corynebacterium glutamicum (strain ATCC 13032 / DSM 20300 / JCM 1318 / BCRC 11384 / CCUG 27702 / LMG 3730 / NBRC 12168 / NCIMB 10025 / NRRL B-2784 / 534).